The following is a 280-amino-acid chain: Digeranylgeranylglyceryl phosphate synthase (280 aa).

9 helical membrane-spanning segments follow: residues 4 to 24 (AAYL…AGIL), 27 to 47 (IIAT…VLTI), 83 to 103 (LMYA…FTPL), 104 to 124 (PLAG…SFLK), 128 to 148 (LIGN…GGAI), 150 to 170 (GTQG…VMLA), 199 to 219 (ATIY…LLLY), 222 to 242 (WGAF…FGAI), and 260 to 280 (KILK…AVLL).

The protein belongs to the UbiA prenyltransferase family. DGGGP synthase subfamily. The cofactor is Mg(2+).

Its subcellular location is the cell membrane. The enzyme catalyses sn-3-O-(geranylgeranyl)glycerol 1-phosphate + (2E,6E,10E)-geranylgeranyl diphosphate = 2,3-bis-O-(geranylgeranyl)-sn-glycerol 1-phosphate + diphosphate. The protein operates within membrane lipid metabolism; glycerophospholipid metabolism. Functionally, prenyltransferase that catalyzes the transfer of the geranylgeranyl moiety of geranylgeranyl diphosphate (GGPP) to the C2 hydroxyl of (S)-3-O-geranylgeranylglyceryl phosphate (GGGP). This reaction is the second ether-bond-formation step in the biosynthesis of archaeal membrane lipids. This is Digeranylgeranylglyceryl phosphate synthase from Methanospirillum hungatei JF-1 (strain ATCC 27890 / DSM 864 / NBRC 100397 / JF-1).